The following is a 339-amino-acid chain: Ketol-acid reductoisomerase (NADP(+)) (339 aa).

In terms of domain architecture, KARI N-terminal Rossmann spans methionine 1–threonine 182. NADP(+) is bound by residues tyrosine 24–glutamine 27, lysine 48, serine 51, threonine 53, and aspartate 83–glutamine 86. The active site involves histidine 108. Glycine 134 is a binding site for NADP(+). Residues asparagine 183–isoleucine 328 enclose the KARI C-terminal knotted domain. Residues aspartate 191, glutamate 195, glutamate 227, and glutamate 231 each coordinate Mg(2+). Residue serine 252 coordinates substrate.

The protein belongs to the ketol-acid reductoisomerase family. Mg(2+) serves as cofactor.

It catalyses the reaction (2R)-2,3-dihydroxy-3-methylbutanoate + NADP(+) = (2S)-2-acetolactate + NADPH + H(+). The enzyme catalyses (2R,3R)-2,3-dihydroxy-3-methylpentanoate + NADP(+) = (S)-2-ethyl-2-hydroxy-3-oxobutanoate + NADPH + H(+). The protein operates within amino-acid biosynthesis; L-isoleucine biosynthesis; L-isoleucine from 2-oxobutanoate: step 2/4. It participates in amino-acid biosynthesis; L-valine biosynthesis; L-valine from pyruvate: step 2/4. Its function is as follows. Involved in the biosynthesis of branched-chain amino acids (BCAA). Catalyzes an alkyl-migration followed by a ketol-acid reduction of (S)-2-acetolactate (S2AL) to yield (R)-2,3-dihydroxy-isovalerate. In the isomerase reaction, S2AL is rearranged via a Mg-dependent methyl migration to produce 3-hydroxy-3-methyl-2-ketobutyrate (HMKB). In the reductase reaction, this 2-ketoacid undergoes a metal-dependent reduction by NADPH to yield (R)-2,3-dihydroxy-isovalerate. In Mesorhizobium japonicum (strain LMG 29417 / CECT 9101 / MAFF 303099) (Mesorhizobium loti (strain MAFF 303099)), this protein is Ketol-acid reductoisomerase (NADP(+)).